We begin with the raw amino-acid sequence, 94 residues long: Small ribosomal subunit protein uS19m (94 aa).

The protein belongs to the universal ribosomal protein uS19 family.

Its subcellular location is the mitochondrion. In Petunia hybrida (Petunia), this protein is Small ribosomal subunit protein uS19m (RPS19).